Consider the following 227-residue polypeptide: Enolase-phosphatase E1 (227 aa).

Residues Asp-11 and Glu-13 each contribute to the Mg(2+) site. Substrate-binding positions include 118–119 (SS) and Lys-161. Asp-186 provides a ligand contact to Mg(2+).

This sequence belongs to the HAD-like hydrolase superfamily. MasA/MtnC family. Monomer. It depends on Mg(2+) as a cofactor.

The protein localises to the cytoplasm. Its subcellular location is the nucleus. The enzyme catalyses 5-methylsulfanyl-2,3-dioxopentyl phosphate + H2O = 1,2-dihydroxy-5-(methylsulfanyl)pent-1-en-3-one + phosphate. The protein operates within amino-acid biosynthesis; L-methionine biosynthesis via salvage pathway; L-methionine from S-methyl-5-thio-alpha-D-ribose 1-phosphate: step 3/6. It functions in the pathway amino-acid biosynthesis; L-methionine biosynthesis via salvage pathway; L-methionine from S-methyl-5-thio-alpha-D-ribose 1-phosphate: step 4/6. Its function is as follows. Bifunctional enzyme that catalyzes the enolization of 2,3-diketo-5-methylthiopentyl-1-phosphate (DK-MTP-1-P) into the intermediate 2-hydroxy-3-keto-5-methylthiopentenyl-1-phosphate (HK-MTPenyl-1-P), which is then dephosphorylated to form the acireductone 1,2-dihydroxy-3-keto-5-methylthiopentene (DHK-MTPene). In Saccharomyces cerevisiae (strain JAY291) (Baker's yeast), this protein is Enolase-phosphatase E1.